A 492-amino-acid polypeptide reads, in one-letter code: Glycogen synthase 1 (492 aa).

Lysine 15 lines the ADP-alpha-D-glucose pocket.

It belongs to the glycosyltransferase 1 family. Bacterial/plant glycogen synthase subfamily.

The enzyme catalyses [(1-&gt;4)-alpha-D-glucosyl](n) + ADP-alpha-D-glucose = [(1-&gt;4)-alpha-D-glucosyl](n+1) + ADP + H(+). It participates in glycan biosynthesis; glycogen biosynthesis. Functionally, synthesizes alpha-1,4-glucan chains using ADP-glucose. The sequence is that of Glycogen synthase 1 from Trichormus variabilis (strain ATCC 29413 / PCC 7937) (Anabaena variabilis).